Reading from the N-terminus, the 360-residue chain is DNA replication and repair protein RecF (360 aa).

Residue 33–40 (GENGSGKT) participates in ATP binding.

The protein belongs to the RecF family.

Its subcellular location is the cytoplasm. Its function is as follows. The RecF protein is involved in DNA metabolism; it is required for DNA replication and normal SOS inducibility. RecF binds preferentially to single-stranded, linear DNA. It also seems to bind ATP. The sequence is that of DNA replication and repair protein RecF from Rickettsia massiliae (strain Mtu5).